Here is a 386-residue protein sequence, read N- to C-terminus: uncharacterized protein (386 aa).

9 helical membrane passes run 48–68, 78–98, 136–156, 171–191, 213–233, 253–273, 285–305, 316–336, and 344–364; these read NLIT…MLVY, PSWV…FDAI, LQLD…YFYI, YFSG…LTAI, FLPY…ALLL, VIKA…VFSL, FLTI…VVIV, WNVL…FGVL, and FFCY…HVIA.

The protein belongs to the CDP-alcohol phosphatidyltransferase class-I family.

It localises to the membrane. This is an uncharacterized protein from Schizosaccharomyces pombe (strain 972 / ATCC 24843) (Fission yeast).